A 274-amino-acid polypeptide reads, in one-letter code: Large ribosomal subunit protein uL2c (274 aa).

Disordered regions lie at residues 1-22 (MAIHLYKTSTPSTRNGAVDNQV) and 225-274 (PVDH…RRSK).

It belongs to the universal ribosomal protein uL2 family. As to quaternary structure, part of the 50S ribosomal subunit.

The protein resides in the plastid. It is found in the chloroplast. This chain is Large ribosomal subunit protein uL2c (rpl2), found in Silene latifolia (White campion).